Consider the following 146-residue polypeptide: Large ribosomal subunit protein uL15 (146 aa).

The interval 1–51 (MKLHELQPAAGSRKVRNRVGRGTSSGNGKTAGRGQKGQKARSGGGVRLGFE) is disordered. Composition is skewed to gly residues over residues 23–35 (TSSG…GRGQ) and 42–51 (SGGGVRLGFE).

This sequence belongs to the universal ribosomal protein uL15 family. Part of the 50S ribosomal subunit.

Binds to the 23S rRNA. In Streptococcus gordonii (strain Challis / ATCC 35105 / BCRC 15272 / CH1 / DL1 / V288), this protein is Large ribosomal subunit protein uL15.